A 314-amino-acid chain; its full sequence is MIKVVFMGTPDFTVPVLRRLIEDGYEVVGVVTQPDRPVGRKKVLTPTPVKVEAEKHGIPVLQPLKIREKDEYEKVLALEPDLIVTAAFGQIVPNEILEAPKYGCINVHASLLPELRGGAPIHYAIMEGKEKTGITIMYMVEKLDAGDILTQVEVEIEERETTGSLFDKLSEAGAHLLSKTVPLLIQGKLEPIKQNEEEVTFAYNIKREQEKIDWTKTGEEVYNHIRGLNPWPVAYTTLAGQVVKVWWGEKVPITEPAEAGTIVAIEEDGFVVATSNETGVKITELQPSGKKRMSCSQFLRGTKPEIGTKLGENA.

110 to 113 (SLLP) is a binding site for (6S)-5,6,7,8-tetrahydrofolate.

This sequence belongs to the Fmt family.

It catalyses the reaction L-methionyl-tRNA(fMet) + (6R)-10-formyltetrahydrofolate = N-formyl-L-methionyl-tRNA(fMet) + (6S)-5,6,7,8-tetrahydrofolate + H(+). Its function is as follows. Attaches a formyl group to the free amino group of methionyl-tRNA(fMet). The formyl group appears to play a dual role in the initiator identity of N-formylmethionyl-tRNA by promoting its recognition by IF2 and preventing the misappropriation of this tRNA by the elongation apparatus. In Bacillus cereus (strain ATCC 14579 / DSM 31 / CCUG 7414 / JCM 2152 / NBRC 15305 / NCIMB 9373 / NCTC 2599 / NRRL B-3711), this protein is Methionyl-tRNA formyltransferase.